The following is a 129-amino-acid chain: Small ribosomal subunit protein uS11 (129 aa).

Belongs to the universal ribosomal protein uS11 family. Part of the 30S ribosomal subunit. Interacts with proteins S7 and S18. Binds to IF-3.

Functionally, located on the platform of the 30S subunit, it bridges several disparate RNA helices of the 16S rRNA. Forms part of the Shine-Dalgarno cleft in the 70S ribosome. This is Small ribosomal subunit protein uS11 from Rhizobium etli (strain CIAT 652).